A 235-amino-acid chain; its full sequence is Voltage-gated hydrogen channel 1 (235 aa).

At 1–62 (MSRYLKHFTV…VMKKLFSSRR (62 aa)) the chain is on the cytoplasmic side. A helical membrane pass occupies residues 63 to 83 (FQIVIVFLVIVDALLVLGELL). The Extracellular portion of the chain corresponds to 84–100 (MDLKIIHPDKYHIAPKV). Residues 101 to 123 (FHYLSLSILTIFLVEVGFKIFVY) form a helical membrane-spanning segment. The Cytoplasmic portion of the chain corresponds to 124-131 (GREFFHHK). The chain crosses the membrane as a helical span at residues 132-152 (FEVLDSIVVVVSFILDLVLLF). At 153–159 (REHEFEA) the chain is on the extracellular side. The helical transmembrane segment at 160–180 (VGLLILLRLWRVARIINGIIL) threads the bilayer. Residues 181 to 235 (SVKTRSEQQVSKLKQVNLKLATKVEQLQHSCVEKEQEIERLTRMLKQHGLLSEQT) are Cytoplasmic-facing. Residues 187–228 (EQQVSKLKQVNLKLATKVEQLQHSCVEKEQEIERLTRMLKQH) are a coiled coil.

It belongs to the hydrogen channel family. As to quaternary structure, homodimer.

It localises to the membrane. The protein resides in the cell membrane. Mediates the voltage-dependent proton permeability of excitable membranes. Forms a proton-selective channel through which protons may pass in accordance with their electrochemical gradient. This is Voltage-gated hydrogen channel 1 (HVCN1) from Gallus gallus (Chicken).